The primary structure comprises 36 residues: Adenylate kinase (36 aa).

10-15 (GAGKGT) lines the ATP pocket. An NMP region spans residues 30-36 (ATGDLFR). Residues Thr-31 and Arg-36 each contribute to the AMP site.

This sequence belongs to the adenylate kinase family. Monomer.

It is found in the cytoplasm. It catalyses the reaction AMP + ATP = 2 ADP. Its pathway is purine metabolism; AMP biosynthesis via salvage pathway; AMP from ADP: step 1/1. Its function is as follows. Catalyzes the reversible transfer of the terminal phosphate group between ATP and AMP. Plays an important role in cellular energy homeostasis and in adenine nucleotide metabolism. This Streptomyces griseus protein is Adenylate kinase (adk).